The chain runs to 352 residues: Histidine biosynthesis bifunctional protein HisB (352 aa).

The segment at 1-163 (MKKILFIDRD…MVASAIINDA (163 aa)) is histidinol-phosphatase. Asp8 (nucleophile) is an active-site residue. Residues Asp8 and Asp10 each contribute to the Mg(2+) site. Residue Asp10 is the Proton donor of the active site. Residues Cys91, His93, Cys99, and Cys101 each contribute to the Zn(2+) site. Asp128 is a binding site for Mg(2+). The interval 164–352 (RKASVQRKTK…NYLPSTKGVL (189 aa)) is imidazoleglycerol-phosphate dehydratase.

In the N-terminal section; belongs to the histidinol-phosphatase family. It in the C-terminal section; belongs to the imidazoleglycerol-phosphate dehydratase family. Mg(2+) serves as cofactor. Zn(2+) is required as a cofactor.

It is found in the cytoplasm. It carries out the reaction D-erythro-1-(imidazol-4-yl)glycerol 3-phosphate = 3-(imidazol-4-yl)-2-oxopropyl phosphate + H2O. The catalysed reaction is L-histidinol phosphate + H2O = L-histidinol + phosphate. It participates in amino-acid biosynthesis; L-histidine biosynthesis; L-histidine from 5-phospho-alpha-D-ribose 1-diphosphate: step 6/9. Its pathway is amino-acid biosynthesis; L-histidine biosynthesis; L-histidine from 5-phospho-alpha-D-ribose 1-diphosphate: step 8/9. In Legionella pneumophila (strain Lens), this protein is Histidine biosynthesis bifunctional protein HisB.